A 422-amino-acid polypeptide reads, in one-letter code: ATP-dependent RNA helicase RhlB (422 aa).

The Q motif signature appears at 9 to 37; sequence QKFSDFALHPLVIKAIENQGFYHCTPIQA. The Helicase ATP-binding domain occupies 40–219; that stretch reads FPITLAGRDV…FEQMNHPEYI (180 aa). An ATP-binding site is contributed by 53–60; it reads AQTGTGKT. The short motif at 165–168 is the DEAD box element; the sequence is DEAD. The 146-residue stretch at 245–390 folds into the Helicase C-terminal domain; sequence RLLQTLIEEE…TSEYNKEALL (146 aa). The disordered stretch occupies residues 394–422; sequence PQPKRLQRHHRHYAGSRNQGASRKPRSPQ. Positions 398–407 are enriched in basic residues; it reads RLQRHHRHYA.

This sequence belongs to the DEAD box helicase family. RhlB subfamily. Component of the RNA degradosome, which is a multiprotein complex involved in RNA processing and mRNA degradation.

The protein resides in the cytoplasm. The enzyme catalyses ATP + H2O = ADP + phosphate + H(+). Its function is as follows. DEAD-box RNA helicase involved in RNA degradation. Has RNA-dependent ATPase activity and unwinds double-stranded RNA. The chain is ATP-dependent RNA helicase RhlB from Hamiltonella defensa subsp. Acyrthosiphon pisum (strain 5AT).